The sequence spans 357 residues: DENN domain-containing protein 10 (357 aa).

The uDENN domain maps to 1–136; the sequence is MAAVVAMDTQ…IAVLTKGICQ (136 aa). The region spanning 152-299 is the cDENN domain; that stretch reads KAYLAGSIKD…PEKSDSQVIQ (148 aa). Residues 301 to 357 enclose the dDENN domain; that stretch reads IALKTKEIFTHLAPFSEVSDDGGKVILNVEALKQQRFPPATENFLYHLAAAEQMLKV.

This sequence belongs to the DENND10 family. Interacts with the coiled-coil heterodimer of CCDC22 and CCDC93; the interaction is direct. Interacts with RAB27A and RAB27B (GDP-bound forms preferentially).

It localises to the late endosome. Its function is as follows. Guanine nucleotide exchange factor (GEF) regulating homeostasis of late endocytic pathway, including endosomal positioning, maturation and secretion, possibly through activating Rab proteins such as RAB27A and RAB27B. Promotes the exchange of GDP to GTP, converting inactive GDP-bound RAB27A and RAB27B into their active GTP-bound form. The sequence is that of DENN domain-containing protein 10 from Mus musculus (Mouse).